The primary structure comprises 272 residues: Adenylate kinase (272 aa).

ATP is bound at residue 55–60; the sequence is GAGKGT. The tract at residues 75–104 is NMP; the sequence is ATGDMLRSQVAKKTPLGKEAKKIMDQGGLV. Residues threonine 76, arginine 81, 102–104, 131–134, and glutamine 138 each bind AMP; these read GLV and GFPR. The segment at 172-209 is LID; sequence GRLVHPASGRSYHKIFNPPKQDMKDDITGEPLIQRSDD. Residues arginine 173 and 182–183 contribute to the ATP site; that span reads SY. The AMP site is built by arginine 206 and arginine 217. Position 245 (glutamine 245) interacts with ATP.

The protein belongs to the adenylate kinase family. AK2 subfamily. In terms of assembly, monomer.

Its subcellular location is the cytoplasm. The protein localises to the cytosol. The protein resides in the mitochondrion intermembrane space. It catalyses the reaction AMP + ATP = 2 ADP. Catalyzes the reversible transfer of the terminal phosphate group between ATP and AMP. Plays an important role in cellular energy homeostasis and in adenine nucleotide metabolism. Adenylate kinase activity is critical for regulation of the phosphate utilization and the AMP de novo biosynthesis pathways. The sequence is that of Adenylate kinase (adk1) from Talaromyces marneffei (Penicillium marneffei).